The following is a 522-amino-acid chain: MAFLDNPTIILAHIRQSHVTSDDTGMCEMVLIDHDVDLEKIHPPSMPGDSGSEIQGSNGETQGYVYAQSVDITSSWDFGIRRRSNTAQRLERLRKERQNQIKCKNIQWKERNSKQSAQELKSLFEKKSLKEKPPISGKQSILSVRLEQCPLQLNNPFNEYSKFDGKGHVGTTATKKIDVYLPLHSSQDRLLPMTVVTMASARVQDLIGLICWQYTSEGREPKLNDNVSAYCLHIAEDDGEVDTDFPPLDSNEPIHKFGFSTLALVEKYSSPGLTSKESLFVRINAAHGFSLIQVDNTKVTMKEILLKAVKRRKGSQKVSGPQYRLEKQSEPNVAVDLDSTLESQSAWEFCQVRENSSRADGVFEEDSQIDIATVQDMLSSHHYKSFKVSMIHRLRFTTDVQLGISGDKVEIDPVTNQKASTKFWIKQKPISIDSDLLCACDLAEEKSPSHAIFKLTYLSNHDYKHLYFESDAATVNEIVLKVNYILESRASTARADYFAQKQRKLNRRTSFSFQKEKKSGQQ.

Alanine 2 is subject to N-acetylalanine. The segment at 2 to 184 (AFLDNPTIIL…KKIDVYLPLH (183 aa)) is interaction with MAP3K2. The interval 2–267 (AFLDNPTIIL…GFSTLALVEK (266 aa)) is interaction with NBN. A Phosphothreonine modification is found at threonine 86. A phosphoserine mark is found at serine 128, serine 186, serine 315, and serine 356. The CRIM domain occupies 139–267 (QSILSVRLEQ…GFSTLALVEK (129 aa)). The SIN1-type RBD stretch occupies residues 279–353 (LFVRINAAHG…QSAWEFCQVR (75 aa)). The SIN1-type PH domain occupies 382 to 487 (HYKSFKVSMI…IVLKVNYILE (106 aa)). Arginine 393 lines the a 1,2-diacyl-sn-glycero-3-phospho-(1D-myo-inositol-3,4,5-trisphosphate) pocket. Threonine 398 carries the phosphothreonine modification. A 1,2-diacyl-sn-glycero-3-phospho-(1D-myo-inositol-3,4,5-trisphosphate) contacts are provided by lysine 428 and lysine 464. The tract at residues 468-522 (FESDAATVNEIVLKVNYILESRASTARADYFAQKQRKLNRRTSFSFQKEKKSGQQ) is interaction with ATF2. Serine 510 is modified (phosphoserine).

It belongs to the SIN1 family. In terms of assembly, component of the mechanistic target of rapamycin complex 2 (mTORC2), consisting in two heterotretramers composed of MTOR, MLST8, RICTOR and MAPKAP1/SIN1. The mTORC2 core complex associates with PRR5/PROTOR1 and/or PRR5L/PROTOR2. Contrary to mTORC1, mTORC2 does not bind to and is not sensitive to FKBP12-rapamycin. Interacts with MAP3K2. Interacts with ATF2. Interacts with MAPK8. Interacts with GTP-bound HRAS and KRAS; inhibiting their activity. Interacts with IFNAR2. In terms of processing, phosphorylation at Ser-128 by PKC promotes relocalization to the perinuclear region, where the mTORC2 complex specifically mediates phosphorylation of SGK1. Phosphorylated at Thr-86 by AKT1 or RPS6KB1 in the presence of growth factors; the effect of this phosphorylation is however unclear. According to two studies, phosphorylation at Thr-86 by AKT1 is part of a positive feedback loop that increases mTORC2 activation. According to another study, phosphorylation at Thr-86 and Thr-398 by RPS6KB1 promotes dissociation from the mTORC2 complex, leading to inhibit mTORC2 signaling.

It localises to the cell membrane. It is found in the endoplasmic reticulum membrane. The protein resides in the early endosome membrane. The protein localises to the late endosome membrane. Its subcellular location is the lysosome membrane. It localises to the golgi apparatus membrane. It is found in the mitochondrion outer membrane. The protein resides in the cytoplasm. The protein localises to the perinuclear region. Its subcellular location is the nucleus. Its activity is regulated as follows. Phosphatidylinositol 3,4,5-trisphosphate (PI(3,4,5)P3) promotes MTOR activation by relieving MAPKAP1/SIN1-mediated inhibition of MTOR that takes place in absence of PI(3,4,5)P3. Functionally, component of the mechanistic target of rapamycin complex 2 (mTORC2), which transduces signals from growth factors to pathways involved in proliferation, cytoskeletal organization, lipogenesis and anabolic output. In response to growth factors, mTORC2 phosphorylates and activates AGC protein kinase family members, including AKT (AKT1, AKT2 and AKT3), PKC (PRKCA, PRKCB and PRKCE) and SGK1. In contrast to mTORC1, mTORC2 is nutrient-insensitive. Within the mTORC2 complex, MAPKAP1/SIN1 acts as a substrate adapter which recognizes and binds AGC protein kinase family members for phosphorylation by MTOR. mTORC2 plays a critical role in AKT1 activation by mediating phosphorylation of different sites depending on the context, such as 'Thr-450', 'Ser-473', 'Ser-477' or 'Thr-479', facilitating the phosphorylation of the activation loop of AKT1 on 'Thr-308' by PDPK1/PDK1 which is a prerequisite for full activation. mTORC2 catalyzes the phosphorylation of SGK1 at 'Ser-422' and of PRKCA on 'Ser-657'. The mTORC2 complex also phosphorylates various proteins involved in insulin signaling, such as FBXW8 and IGF2BP1. mTORC2 acts upstream of Rho GTPases to regulate the actin cytoskeleton, probably by activating one or more Rho-type guanine nucleotide exchange factors. mTORC2 promotes the serum-induced formation of stress-fibers or F-actin. MAPKAP1 inhibits MAP3K2 by preventing its dimerization and autophosphorylation. Inhibits HRAS and KRAS independently of mTORC2 complex. Enhances osmotic stress-induced phosphorylation of ATF2 and ATF2-mediated transcription. Involved in ciliogenesis, regulates cilia length through its interaction with CCDC28B independently of mTORC2 complex. This Pongo abelii (Sumatran orangutan) protein is Target of rapamycin complex 2 subunit MAPKAP1 (MAPKAP1).